Reading from the N-terminus, the 300-residue chain is MALYELTNLLSIDDLTNEQILNLIKRAIDIKENNNQIKRDDLYVANLFFENSTRTKMSFVVAQNKLGLKSIDFEVSTSSVNKGETLYDTCKTLEMIGVNMLVIRHSQKQYYKELENLEIPIINGGDGSGEHPTQCLLDLMTIYEKFKSFEGLKIAIVGDIKNSRVAKSNYKALTKLGAIVHFVAPDKFKDDEFNNYKEFDEIINEIDVCMLLRVQHERHESQDKTQEFINIYHQQHGLSLPRYNKLKENAIVMHPAPVNRGVEIDTTLVESDKSVIFLQMKNGMFMRQAVLEYIIAENNL.

Carbamoyl phosphate contacts are provided by Arg54 and Thr55. L-aspartate is bound at residue Lys82. Carbamoyl phosphate-binding residues include Arg104, His131, and Gln134. Positions 164 and 213 each coordinate L-aspartate. Carbamoyl phosphate is bound by residues Ala256 and Pro257.

The protein belongs to the aspartate/ornithine carbamoyltransferase superfamily. ATCase family. As to quaternary structure, heterododecamer (2C3:3R2) of six catalytic PyrB chains organized as two trimers (C3), and six regulatory PyrI chains organized as three dimers (R2).

The enzyme catalyses carbamoyl phosphate + L-aspartate = N-carbamoyl-L-aspartate + phosphate + H(+). Its pathway is pyrimidine metabolism; UMP biosynthesis via de novo pathway; (S)-dihydroorotate from bicarbonate: step 2/3. Catalyzes the condensation of carbamoyl phosphate and aspartate to form carbamoyl aspartate and inorganic phosphate, the committed step in the de novo pyrimidine nucleotide biosynthesis pathway. The polypeptide is Aspartate carbamoyltransferase catalytic subunit (Malacoplasma penetrans (strain HF-2) (Mycoplasma penetrans)).